A 330-amino-acid chain; its full sequence is Tryptophan--tRNA ligase (330 aa).

ATP contacts are provided by residues 6 to 8 and 14 to 15; these read QPT and GN. The short motif at 7-15 is the 'HIGH' region element; the sequence is PTGSLHLGN. Asp-130 provides a ligand contact to L-tryptophan. Residues 142 to 144, Val-185, and 194 to 198 contribute to the ATP site; these read GED and KMSKS. The short motif at 194 to 198 is the 'KMSKS' region element; sequence KMSKS.

The protein belongs to the class-I aminoacyl-tRNA synthetase family. In terms of assembly, homodimer.

It is found in the cytoplasm. It carries out the reaction tRNA(Trp) + L-tryptophan + ATP = L-tryptophyl-tRNA(Trp) + AMP + diphosphate + H(+). Catalyzes the attachment of tryptophan to tRNA(Trp). The sequence is that of Tryptophan--tRNA ligase from Thermosynechococcus vestitus (strain NIES-2133 / IAM M-273 / BP-1).